The following is a 331-amino-acid chain: Oxygen-evolving enhancer protein 1-2, chloroplastic (331 aa).

The N-terminal 57 residues, 1-57, are a transit peptide targeting the chloroplast; the sequence is MATSLQAAATFLQPAKIAASPSRNVHLRSNQTVGKSFGLDSSQARLTCSLHSDLKDF. Residues 58–84 constitute a thylakoid transit peptide; it reads AGKCSDAAKIAGFALATSALVVSGAGA.

It belongs to the PsbO family.

It is found in the plastid. It localises to the chloroplast thylakoid membrane. Its function is as follows. Stabilizes the manganese cluster which is the primary site of water splitting. Regulates dephosphorylation and turnover of the PSII reaction center D1 protein. The polypeptide is Oxygen-evolving enhancer protein 1-2, chloroplastic (PSBO2) (Arabidopsis thaliana (Mouse-ear cress)).